Consider the following 273-residue polypeptide: 4-hydroxy-tetrahydrodipicolinate reductase (273 aa).

NAD(+) contacts are provided by residues glycine 11–methionine 16 and glycine 106–threonine 108. Histidine 162 functions as the Proton donor/acceptor in the catalytic mechanism. Histidine 163 contacts (S)-2,3,4,5-tetrahydrodipicolinate. The active-site Proton donor is the lysine 166. A (S)-2,3,4,5-tetrahydrodipicolinate-binding site is contributed by glycine 172 to threonine 173.

The protein belongs to the DapB family.

Its subcellular location is the cytoplasm. It catalyses the reaction (S)-2,3,4,5-tetrahydrodipicolinate + NAD(+) + H2O = (2S,4S)-4-hydroxy-2,3,4,5-tetrahydrodipicolinate + NADH + H(+). It carries out the reaction (S)-2,3,4,5-tetrahydrodipicolinate + NADP(+) + H2O = (2S,4S)-4-hydroxy-2,3,4,5-tetrahydrodipicolinate + NADPH + H(+). Its pathway is amino-acid biosynthesis; L-lysine biosynthesis via DAP pathway; (S)-tetrahydrodipicolinate from L-aspartate: step 4/4. Its function is as follows. Catalyzes the conversion of 4-hydroxy-tetrahydrodipicolinate (HTPA) to tetrahydrodipicolinate. The sequence is that of 4-hydroxy-tetrahydrodipicolinate reductase from Synechococcus sp. (strain ATCC 27144 / PCC 6301 / SAUG 1402/1) (Anacystis nidulans).